We begin with the raw amino-acid sequence, 529 residues long: Peptide chain release factor 3 (529 aa).

In terms of domain architecture, tr-type G spans Ala11 to Met280. GTP-binding positions include Ser20–Thr27, Asp88–His92, and Asn142–Asp145.

Belongs to the TRAFAC class translation factor GTPase superfamily. Classic translation factor GTPase family. PrfC subfamily.

The protein localises to the cytoplasm. In terms of biological role, increases the formation of ribosomal termination complexes and stimulates activities of RF-1 and RF-2. It binds guanine nucleotides and has strong preference for UGA stop codons. It may interact directly with the ribosome. The stimulation of RF-1 and RF-2 is significantly reduced by GTP and GDP, but not by GMP. This Shigella flexneri protein is Peptide chain release factor 3.